Here is a 199-residue protein sequence, read N- to C-terminus: NADH-quinone oxidoreductase subunit C (199 aa).

Belongs to the complex I 30 kDa subunit family. In terms of assembly, NDH-1 is composed of 14 different subunits. Subunits NuoB, C, D, E, F, and G constitute the peripheral sector of the complex.

The protein resides in the cell inner membrane. The catalysed reaction is a quinone + NADH + 5 H(+)(in) = a quinol + NAD(+) + 4 H(+)(out). NDH-1 shuttles electrons from NADH, via FMN and iron-sulfur (Fe-S) centers, to quinones in the respiratory chain. The immediate electron acceptor for the enzyme in this species is believed to be ubiquinone. Couples the redox reaction to proton translocation (for every two electrons transferred, four hydrogen ions are translocated across the cytoplasmic membrane), and thus conserves the redox energy in a proton gradient. The protein is NADH-quinone oxidoreductase subunit C of Leptothrix cholodnii (strain ATCC 51168 / LMG 8142 / SP-6) (Leptothrix discophora (strain SP-6)).